Consider the following 356-residue polypeptide: Retinoic acid-induced protein 3 (356 aa).

Topologically, residues 1-35 (MTTPTTAPSGCRSDLDSRYHRLCDLAEGWGIALET) are extracellular. The chain crosses the membrane as a helical span at residues 36-56 (LAAVGAVATVACMFALVFLIC). Residues 57–68 (KVQDSNKRKMLP) are Cytoplasmic-facing. A helical transmembrane segment spans residues 69–89 (AQFLFLLGVLGVFGLTFAFII). Topologically, residues 90–101 (KLDGATGPTRFF) are extracellular. The helical transmembrane segment at 102–122 (LFGVLFAICFSCLLAHAFNLI) threads the bilayer. Residues 123-131 (KLVRGRKPL) are Cytoplasmic-facing. The helical transmembrane segment at 132–152 (SWLVILSLAVGFSLVQDVIAI) threads the bilayer. Over 153-178 (EYLVLTMNRTNVNVFSELPAPRRNED) the chain is Extracellular. N160 carries an N-linked (GlcNAc...) asparagine glycan. The helical transmembrane segment at 179-199 (FVMLLIYVLVLMVLTFFTSFL) threads the bilayer. At 200 to 214 (VFCGSFSGWKRHGFH) the chain is on the cytoplasmic side. A helical transmembrane segment spans residues 215 to 235 (ICFTSFLSIAIWVAWIVLLLI). Over 236–244 (PDIDRKWDD) the chain is Extracellular. A helical membrane pass occupies residues 245 to 265 (TILSTALVANGWVFLAFYILP). Topologically, residues 266-356 (EFRQLPRQRS…NDYEGRKGDS (91 aa)) are cytoplasmic. The residue at position 303 (S303) is a Phosphoserine. Y318 and Y321 each carry phosphotyrosine. The interval 336–356 (IPRAQAPASPYNDYEGRKGDS) is disordered. Position 344 is a phosphoserine (S344). Phosphotyrosine is present on residues Y346 and Y349.

The protein belongs to the G-protein coupled receptor 3 family. In terms of assembly, interacts (via its transmembrane domain) with EGFR. In terms of processing, phosphorylated in two conserved double-tyrosine motifs, Tyr 318/Tyr-321 and Tyr-346/Tyr-349 by EGFR. Tyr-318 and Tyr-321 are the preferred residues responsible for EGFR-mediated GPRC5A phosphorylation. In terms of tissue distribution, expressed predominantly in normal fetal and adult lung. Almost undetectable or expressed at very low levels in other tissues.

Its subcellular location is the cell membrane. Its function is as follows. Orphan receptor. Could be involved in modulating differentiation and maintaining homeostasis of epithelial cells. This retinoic acid-inducible GPCR provides evidence for a possible interaction between retinoid and G-protein signaling pathways. Functions as a negative modulator of EGFR signaling. Acts as a lung tumor suppressor. The sequence is that of Retinoic acid-induced protein 3 (Gprc5a) from Mus musculus (Mouse).